The primary structure comprises 122 residues: Small ribosomal subunit protein uS12c (122 aa).

The protein belongs to the universal ribosomal protein uS12 family. Part of the 30S ribosomal subunit.

It is found in the plastid. Its subcellular location is the chloroplast. With S4 and S5 plays an important role in translational accuracy. Located at the interface of the 30S and 50S subunits. The chain is Small ribosomal subunit protein uS12c (rps12) from Chloranthus spicatus (Chulantree).